The sequence spans 355 residues: tRNA (guanine-N(1)-)-methyltransferase (355 aa).

Residues Gly109 and 129-134 (IGDYVL) each bind S-adenosyl-L-methionine.

The protein belongs to the RNA methyltransferase TrmD family. In terms of assembly, homodimer.

It localises to the cytoplasm. The catalysed reaction is guanosine(37) in tRNA + S-adenosyl-L-methionine = N(1)-methylguanosine(37) in tRNA + S-adenosyl-L-homocysteine + H(+). In terms of biological role, specifically methylates guanosine-37 in various tRNAs. This chain is tRNA (guanine-N(1)-)-methyltransferase, found in Chlamydia abortus (strain DSM 27085 / S26/3) (Chlamydophila abortus).